A 527-amino-acid polypeptide reads, in one-letter code: Probable protein kinase UbiB (527 aa).

The Protein kinase domain occupies 118-501 (DFERVPVASA…QKRTNRLLQG (384 aa)). ATP is bound by residues 124 to 132 (VASASIAQV) and Lys150. Asp285 (proton acceptor) is an active-site residue. A helical membrane pass occupies residues 502 to 522 (LLMFGVAVGVGAVLARAWLAI).

The protein belongs to the ABC1 family. UbiB subfamily.

Its subcellular location is the cell inner membrane. The protein operates within cofactor biosynthesis; ubiquinone biosynthesis [regulation]. Functionally, is probably a protein kinase regulator of UbiI activity which is involved in aerobic coenzyme Q (ubiquinone) biosynthesis. The protein is Probable protein kinase UbiB of Paraburkholderia phymatum (strain DSM 17167 / CIP 108236 / LMG 21445 / STM815) (Burkholderia phymatum).